The primary structure comprises 234 residues: Sugar fermentation stimulation protein A (234 aa).

The segment at residues L201 to S220 is a DNA-binding region (H-T-H motif).

Belongs to the SfsA family.

Binds to DNA non-specifically. Could be a regulatory factor involved in maltose metabolism. The chain is Sugar fermentation stimulation protein A from Escherichia fergusonii (strain ATCC 35469 / DSM 13698 / CCUG 18766 / IAM 14443 / JCM 21226 / LMG 7866 / NBRC 102419 / NCTC 12128 / CDC 0568-73).